The chain runs to 246 residues: 1-(5-phosphoribosyl)-5-[(5-phosphoribosylamino)methylideneamino] imidazole-4-carboxamide isomerase (246 aa).

Asp-8 (proton acceptor) is an active-site residue. Residue Asp-130 is the Proton donor of the active site.

The protein belongs to the HisA/HisF family.

Its subcellular location is the cytoplasm. It catalyses the reaction 1-(5-phospho-beta-D-ribosyl)-5-[(5-phospho-beta-D-ribosylamino)methylideneamino]imidazole-4-carboxamide = 5-[(5-phospho-1-deoxy-D-ribulos-1-ylimino)methylamino]-1-(5-phospho-beta-D-ribosyl)imidazole-4-carboxamide. It functions in the pathway amino-acid biosynthesis; L-histidine biosynthesis; L-histidine from 5-phospho-alpha-D-ribose 1-diphosphate: step 4/9. The sequence is that of 1-(5-phosphoribosyl)-5-[(5-phosphoribosylamino)methylideneamino] imidazole-4-carboxamide isomerase from Shigella dysenteriae serotype 1 (strain Sd197).